Reading from the N-terminus, the 616-residue chain is Chaperone protein HscA (616 aa).

It belongs to the heat shock protein 70 family.

Its function is as follows. Chaperone involved in the maturation of iron-sulfur cluster-containing proteins. Has a low intrinsic ATPase activity which is markedly stimulated by HscB. Involved in the maturation of IscU. The sequence is that of Chaperone protein HscA from Shigella flexneri serotype 5b (strain 8401).